The chain runs to 487 residues: Probable glycine dehydrogenase (decarboxylating) subunit 2 (487 aa).

K273 carries the post-translational modification N6-(pyridoxal phosphate)lysine.

Belongs to the GcvP family. C-terminal subunit subfamily. As to quaternary structure, the glycine cleavage system is composed of four proteins: P, T, L and H. In this organism, the P 'protein' is a heterodimer of two subunits. It depends on pyridoxal 5'-phosphate as a cofactor.

It catalyses the reaction N(6)-[(R)-lipoyl]-L-lysyl-[glycine-cleavage complex H protein] + glycine + H(+) = N(6)-[(R)-S(8)-aminomethyldihydrolipoyl]-L-lysyl-[glycine-cleavage complex H protein] + CO2. In terms of biological role, the glycine cleavage system catalyzes the degradation of glycine. The P protein binds the alpha-amino group of glycine through its pyridoxal phosphate cofactor; CO(2) is released and the remaining methylamine moiety is then transferred to the lipoamide cofactor of the H protein. The polypeptide is Probable glycine dehydrogenase (decarboxylating) subunit 2 (Lysinibacillus sphaericus (strain C3-41)).